The chain runs to 244 residues: Ribosomal RNA small subunit methyltransferase G (244 aa).

Residues glycine 84, phenylalanine 89, 107-109 (DST), 135-136 (AE), and arginine 154 contribute to the S-adenosyl-L-methionine site.

Belongs to the methyltransferase superfamily. RNA methyltransferase RsmG family.

Its subcellular location is the cytoplasm. Specifically methylates the N7 position of a guanine in 16S rRNA. This is Ribosomal RNA small subunit methyltransferase G from Nostoc punctiforme (strain ATCC 29133 / PCC 73102).